The primary structure comprises 159 residues: MQKRAIYPGTFDPITNGHLDIVTRATQMFDHVILAIAASPGKKPMFTLEERVALAQKATAHLGNVEVVGFSDLMANFARDRQANILIRGLRAVADFEYEMQLAHMNRHLMPQLESVFLMPSKEWSFISSSLVKEVARHQGDVTHFLPDNVHQALMDKLK.

Residue T10 participates in substrate binding. Residues 10–11 and H18 contribute to the ATP site; that span reads TF. Residues K42, M74, and R88 each contribute to the substrate site. Residues 89–91, E99, and 124–130 each bind ATP; these read GLR and WSFISSS.

This sequence belongs to the bacterial CoaD family. In terms of assembly, homohexamer. The cofactor is Mg(2+).

It is found in the cytoplasm. The catalysed reaction is (R)-4'-phosphopantetheine + ATP + H(+) = 3'-dephospho-CoA + diphosphate. Its pathway is cofactor biosynthesis; coenzyme A biosynthesis; CoA from (R)-pantothenate: step 4/5. Functionally, reversibly transfers an adenylyl group from ATP to 4'-phosphopantetheine, yielding dephospho-CoA (dPCoA) and pyrophosphate. The polypeptide is Phosphopantetheine adenylyltransferase (Salmonella agona (strain SL483)).